Reading from the N-terminus, the 907-residue chain is Probable dipeptidyl-aminopeptidase B (907 aa).

Basic and acidic residues predominate over residues 1-11; that stretch reads MYDQVPYRDTD. A disordered region spans residues 1–71; the sequence is MYDQVPYRDT…RGKPDEDDDL (71 aa). At 1–88 the chain is on the cytoplasmic side; sequence MYDQVPYRDT…LKPMERKVRR (88 aa). Over residues 22-36 the composition is skewed to low complexity; it reads SDSNRSSIDTTSTTS. The helical; Signal-anchor for type II membrane protein transmembrane segment at 89-109 threads the bilayer; sequence AMYLLAFLMIGGWFLALAVYV. At 110–907 the chain is on the vacuolar side; that stretch reads SREHFGTPDT…PLRKRNRELV (798 aa). Asn185 and Asn341 each carry an N-linked (GlcNAc...) asparagine glycan. The active-site Charge relay system is Ser746. The N-linked (GlcNAc...) asparagine glycan is linked to Asn800. Active-site charge relay system residues include Asp823 and His856.

This sequence belongs to the peptidase S9B family.

The protein resides in the vacuole membrane. The enzyme catalyses Release of an N-terminal dipeptide, Xaa-Yaa-|-Zaa-, from a polypeptide, preferentially when Yaa is Pro, provided Zaa is neither Pro nor hydroxyproline.. Type IV dipeptidyl-peptidase which removes N-terminal dipeptides sequentially from polypeptides having unsubstituted N-termini provided that the penultimate residue is proline. The sequence is that of Probable dipeptidyl-aminopeptidase B (DAPB) from Tuber melanosporum (strain Mel28) (Perigord black truffle).